Consider the following 190-residue polypeptide: MAFIAKSFYDLSAISLDGEKVDFNTFRGRAVLIENVASLUGTTTRDFTQLNELQCRFPRRLVVLGFPCNQFGHQENCQNEEILNSLKYVRPGGGYQPTFTLVQKCEVNGQNEHPVFAYLKDKLPYPHDDPFSLMTDPKLIIWSPVRRSDVAWNFEKFLIGPEVEPFRRYSRTFPTINIEPDIKRLLKVAI.

U40 is an active-site residue. Position 40 (U40) is a non-standard amino acid, selenocysteine.

The protein belongs to the glutathione peroxidase family. Homotetramer. As to expression, exclusively expressed in the stomach and small intestine.

It localises to the cytoplasm. The protein resides in the cytosol. The catalysed reaction is 2 glutathione + H2O2 = glutathione disulfide + 2 H2O. It catalyses the reaction a hydroperoxy polyunsaturated fatty acid + 2 glutathione = a hydroxy polyunsaturated fatty acid + glutathione disulfide + H2O. It carries out the reaction tert-butyl hydroperoxide + 2 glutathione = tert-butanol + glutathione disulfide + H2O. The enzyme catalyses cumene hydroperoxide + 2 glutathione = 2-phenylpropan-2-ol + glutathione disulfide + H2O. The catalysed reaction is (13S)-hydroperoxy-(9Z,11E)-octadecadienoate + 2 glutathione = (13S)-hydroxy-(9Z,11E)-octadecadienoate + glutathione disulfide + H2O. It catalyses the reaction (5S)-hydroperoxy-(6E,8Z,11Z,14Z)-eicosatetraenoate + 2 glutathione = (5S)-hydroxy-(6E,8Z,11Z,14Z)-eicosatetraenoate + glutathione disulfide + H2O. It carries out the reaction (12R)-hydroperoxy-(5Z,8Z,10E,14Z)-eicosatetraenoate + 2 glutathione = (12R)-hydroxy-(5Z,8Z,10E,14Z)-eicosatetraenoate + glutathione disulfide + H2O. The enzyme catalyses (15S)-hydroperoxy-(5Z,8Z,11Z,13E)-eicosatetraenoate + 2 glutathione = (15S)-hydroxy-(5Z,8Z,11Z,13E)-eicosatetraenoate + glutathione disulfide + H2O. Catalyzes the reduction of hydroperoxides in a glutathione-dependent manner thus regulating cellular redox homeostasis. Can reduce small soluble hydroperoxides such as H2O2, cumene hydroperoxide and tert-butyl hydroperoxide, as well as several fatty acid-derived hydroperoxides. Cannot reduce phosphatidycholine hydroperoxide. The chain is Glutathione peroxidase 2 (GPX2) from Macaca fuscata fuscata (Japanese macaque).